Here is a 75-residue protein sequence, read N- to C-terminus: UPF0346 protein OB1736 (75 aa).

The protein belongs to the UPF0346 family.

This Oceanobacillus iheyensis (strain DSM 14371 / CIP 107618 / JCM 11309 / KCTC 3954 / HTE831) protein is UPF0346 protein OB1736.